We begin with the raw amino-acid sequence, 730 residues long: Guanyl-specific ribonuclease pgl-1 (730 aa).

The tract at residues 205–447 is involved in dimerization; that stretch reads KQLMLDGPKS…VTRIVESLEK (243 aa). The active-site Proton acceptor is His-437. Polar residues-rich tracts occupy residues 452–472 and 568–595; these read DTPSGRKSNVQPSTSQQQDSA and DANQDTSSSASPEVAPSFSTDGWDSPTK. 3 disordered regions span residues 452-475, 567-639, and 686-730; these read DTPSGRKSNVQPSTSQQQDSAYTK, SDAN…TPMP, and GGRG…RGGF. The tract at residues 674–730 is RNA-binding RGG-box; it reads GGGRGGYGGGDRGGRGGYGGDRGGRGGYGGGDRGGRGGYGGDRGRGGYGGRGGRGGF.

Homodimer. Interacts with pgl-2 and pgl-3; this association is not required for P-granule localization of either pgl-2 or pgl-3. Interacts with ife-1. Interacts with prmt-1; the interaction is direct. Interacts with nmad-1. Interacts with P granule components meg-1, meg-3 and meg-4. Does not require metal ions for catalytic activity. is required as a cofactor. Post-translationally, methylated at arginine residues in the RNA-binding RGG-box by prmt-1. Methylation promotes P-granule degradation by autophagy. In terms of tissue distribution, expressed in the germline. Expressed in most somatic cells.

Its subcellular location is the cytoplasmic granule. It catalyses the reaction [RNA] containing guanosine + H2O = an [RNA fragment]-3'-guanosine-3'-phosphate + a 5'-hydroxy-ribonucleotide-3'-[RNA fragment].. With respect to regulation, not inhibited by RNase inhibitor RNasin. Guanyl-specific endoribonuclease which cleaves the phosphodiester bond in single-stranded RNA between the 3'-guanylic residue and the 5'-OH residue of adjacent nucleotide, resulting in the formation of a corresponding 2',3'-cyclic phosphate intermediate. Together with the P-granule component pgl-3, is involved in the formation of P-granules. Together with pgl-3, probably recruits other granule components such as pos-1, mex-3 and glh-1 to P-granules. In addition, may act redundantly with pgl-3 to protect germ cells from excessive germline apoptosis during normal oogenesis and development of the two gonadal arms. This may in part be through regulating the localization of sir-2.1 which is involved in germ cell apoptosis. May protect somatic cells from excessive apoptosis during normal development. Essential role in male and female postembryonic germline development; maternally provided protein maintains a population of proliferating germ cells and zygotic expression is required for correct oogenesis. This Caenorhabditis elegans protein is Guanyl-specific ribonuclease pgl-1.